Here is a 589-residue protein sequence, read N- to C-terminus: BTB/POZ domain and ankyrin repeat-containing protein NPR3 (589 aa).

Residues 1-25 form a disordered region; the sequence is METSTISFSSSSPPSPPPPQPAPGD. Over residues 13-22 the composition is skewed to pro residues; sequence PPSPPPPQPA. The BTB domain occupies 52–137; sequence AEIVLASGGG…LYTGRLRSAP (86 aa). A C2HC NPR-type zinc finger spans residues 140 to 154; that stretch reads AAACLDDGCSHDACR. The Zn(2+) site is built by cysteine 143, cysteine 148, histidine 150, and cysteine 153. ANK repeat units follow at residues 260 to 290, 292 to 319, and 323 to 352; these read KRVR…TLDD, FAIH…NVNL, and SGYT…SVLE. Positions 382–521 are salicylic acid-binding core (SBC); the sequence is ERSKAYLCIG…LDKFLNEEST (140 aa). Arginine 433 serves as a coordination point for salicylate. Positions 555–589 are disordered; the sequence is DKAAGAAISSSTSASSSPRYETKLRPGNKKGKLSR. Low complexity predominate over residues 558–571; it reads AGAAISSSTSASSS. Basic residues predominate over residues 580-589; it reads PGNKKGKLSR.

Belongs to the plant 'ANKYRIN-BTB/POZ' family. 'NPR1-like' subfamily. In terms of assembly, interacts with TGA2.1, TGA2.2, TGA2.3, LG2, TGAL1, TGAL4, NRR, RH1, RH2 and RH3.

The protein localises to the nucleus. The protein operates within protein modification; protein ubiquitination. Functionally, salicylic acid (SA)-binding substrate-specific adapter of an E3 ubiquitin-protein ligase complex (CUL3-RBX1-BTB) which mediates the ubiquitination and subsequent proteasomal degradation of target proteins. Involved in defense response against the bacterial blight disease caused by Xanthomonas oryzae pv. oryzae (Xoo). Plants expressing an NPR3/NH3 transgene driven by its native promoter show enhanced resistance to the Xoo pathogen, and exhibit elevated sensitivity to benzothiadiazole (BTH) treatment and enhanced induction of defense-related genes upon treatment with BTH. Intriguingly, constitutive over-expression of NPR3/NH3 with a ubiquitin promoter does not confer disease resistance to Xoo. The sequence is that of BTB/POZ domain and ankyrin repeat-containing protein NPR3 from Oryza sativa subsp. japonica (Rice).